Consider the following 147-residue polypeptide: D-aminoacyl-tRNA deacylase (147 aa).

The Gly-cisPro motif, important for rejection of L-amino acids signature appears at 137–138; the sequence is GP.

The protein belongs to the DTD family. As to quaternary structure, homodimer.

The protein localises to the cytoplasm. The enzyme catalyses glycyl-tRNA(Ala) + H2O = tRNA(Ala) + glycine + H(+). The catalysed reaction is a D-aminoacyl-tRNA + H2O = a tRNA + a D-alpha-amino acid + H(+). In terms of biological role, an aminoacyl-tRNA editing enzyme that deacylates mischarged D-aminoacyl-tRNAs. Also deacylates mischarged glycyl-tRNA(Ala), protecting cells against glycine mischarging by AlaRS. Acts via tRNA-based rather than protein-based catalysis; rejects L-amino acids rather than detecting D-amino acids in the active site. By recycling D-aminoacyl-tRNA to D-amino acids and free tRNA molecules, this enzyme counteracts the toxicity associated with the formation of D-aminoacyl-tRNA entities in vivo and helps enforce protein L-homochirality. This Bacillus pumilus (strain SAFR-032) protein is D-aminoacyl-tRNA deacylase.